Here is a 530-residue protein sequence, read N- to C-terminus: DEK domain-containing chromatin-associated protein 2 (530 aa).

Composition is skewed to basic and acidic residues over residues Met1 to Glu47 and Ala57 to Glu68. Residues Met1 to Gly130 form a disordered region. Residues Ile41 to Glu61 are a coiled coil. Residues Asp69–Gly82 show a composition bias toward acidic residues. 2 stretches are compositionally biased toward basic and acidic residues: residues Ser83–Thr93 and Arg100–Arg110. A coiled-coil region spans residues Glu185–Glu205. The disordered stretch occupies residues Ile246–Lys430. Residues Ala253–Gly263 are compositionally biased toward basic residues. The Nuclear localization signal 1 motif lies at Pro260–Glu267. Residues Ser286–Glu332 are compositionally biased toward acidic residues. 2 short sequence motifs (nuclear localization signal) span residues Ser343–Ser350 and Ala384–His391. The segment covering Lys374–Ala384 has biased composition (polar residues). Residues Gln387–Glu397 show a composition bias toward basic and acidic residues. A DEK-C domain is found at Glu426 to Asn481. DNA-binding regions lie at residues Asp444 to Ser458 and Lys473 to Thr477. The segment at Ala482–Asp530 is disordered. Positions Thr484 to Ala497 are enriched in acidic residues. A coiled-coil region spans residues Glu492 to Glu527. A compositionally biased stretch (basic and acidic residues) spans Glu516–Asp530.

As to quaternary structure, found in a mRNA splicing-dependent exon junction complex (EJC). Binds specifically histones H3 and H4.

The protein localises to the nucleus. It is found in the nucleolus. Chromatin-associated protein which contributes to the modulation of chromatin structure (such as super-helical structure of DNA) and function. Binds to chromatin of protein-coding genes throughout the genome to regulate nucleosome occupancy and chromatin accessibility, and to modulate the expression of target genes. This is DEK domain-containing chromatin-associated protein 2 from Arabidopsis thaliana (Mouse-ear cress).